Consider the following 132-residue polypeptide: Small ribosomal subunit protein uS13 (132 aa).

Residues Pro106–Lys132 are disordered. The segment covering Ala116 to Lys132 has biased composition (basic residues).

This sequence belongs to the universal ribosomal protein uS13 family. Part of the 30S ribosomal subunit. Forms a loose heterodimer with protein S19. Forms two bridges to the 50S subunit in the 70S ribosome.

In terms of biological role, located at the top of the head of the 30S subunit, it contacts several helices of the 16S rRNA. In the 70S ribosome it contacts the 23S rRNA (bridge B1a) and protein L5 of the 50S subunit (bridge B1b), connecting the 2 subunits; these bridges are implicated in subunit movement. Contacts the tRNAs in the A and P-sites. This is Small ribosomal subunit protein uS13 from Mycoplasmopsis pulmonis (strain UAB CTIP) (Mycoplasma pulmonis).